We begin with the raw amino-acid sequence, 337 residues long: Glycerol-3-phosphate dehydrogenase [NAD(P)+] (337 aa).

Ser-17, Tyr-18, His-38, and Lys-112 together coordinate NADPH. Sn-glycerol 3-phosphate-binding residues include Lys-112, Gly-141, and Thr-143. Ala-145 serves as a coordination point for NADPH. Lys-197, Asp-250, Ser-260, Arg-261, and Asn-262 together coordinate sn-glycerol 3-phosphate. Lys-197 (proton acceptor) is an active-site residue. Arg-261 lines the NADPH pocket. Residues Val-285 and Glu-287 each coordinate NADPH.

It belongs to the NAD-dependent glycerol-3-phosphate dehydrogenase family.

The protein localises to the cytoplasm. The catalysed reaction is sn-glycerol 3-phosphate + NAD(+) = dihydroxyacetone phosphate + NADH + H(+). The enzyme catalyses sn-glycerol 3-phosphate + NADP(+) = dihydroxyacetone phosphate + NADPH + H(+). It participates in membrane lipid metabolism; glycerophospholipid metabolism. Its function is as follows. Catalyzes the reduction of the glycolytic intermediate dihydroxyacetone phosphate (DHAP) to sn-glycerol 3-phosphate (G3P), the key precursor for phospholipid synthesis. This is Glycerol-3-phosphate dehydrogenase [NAD(P)+] from Pasteurella multocida (strain Pm70).